The sequence spans 132 residues: Nickel-responsive regulator (132 aa).

Ni(2+)-binding residues include His76, His87, His89, and Cys95.

It belongs to the transcriptional regulatory CopG/NikR family. As to quaternary structure, homotetramer. Ni(2+) serves as cofactor.

In terms of biological role, transcriptional repressor of the nikABCDE operon. Is active in the presence of excessive concentrations of intracellular nickel. In Klebsiella pneumoniae subsp. pneumoniae (strain ATCC 700721 / MGH 78578), this protein is Nickel-responsive regulator.